Consider the following 292-residue polypeptide: Undecaprenyl-diphosphatase 2 (292 aa).

5 helical membrane-spanning segments follow: residues 89–109, 118–138, 203–223, 232–252, and 263–283; these read WLVI…QDAI, LIAT…WYAS, FLLA…SIGG, PTIL…AWFL, and FVLY…GGAL.

It belongs to the UppP family.

The protein localises to the cell membrane. It catalyses the reaction di-trans,octa-cis-undecaprenyl diphosphate + H2O = di-trans,octa-cis-undecaprenyl phosphate + phosphate + H(+). Catalyzes the dephosphorylation of undecaprenyl diphosphate (UPP). Confers resistance to bacitracin. The sequence is that of Undecaprenyl-diphosphatase 2 from Frankia casuarinae (strain DSM 45818 / CECT 9043 / HFP020203 / CcI3).